Here is a 468-residue protein sequence, read N- to C-terminus: Kynureninase 2 (468 aa).

Pyridoxal 5'-phosphate is bound by residues L134, T135, 162–165 (FPSD), D247, H250, and Y272. K273 carries the N6-(pyridoxal phosphate)lysine modification. Residues W312 and N340 each coordinate pyridoxal 5'-phosphate.

This sequence belongs to the kynureninase family. In terms of assembly, homodimer. The cofactor is pyridoxal 5'-phosphate.

Its subcellular location is the cytoplasm. The catalysed reaction is L-kynurenine + H2O = anthranilate + L-alanine + H(+). It catalyses the reaction 3-hydroxy-L-kynurenine + H2O = 3-hydroxyanthranilate + L-alanine + H(+). It participates in amino-acid degradation; L-kynurenine degradation; L-alanine and anthranilate from L-kynurenine: step 1/1. It functions in the pathway cofactor biosynthesis; NAD(+) biosynthesis; quinolinate from L-kynurenine: step 2/3. Its function is as follows. Catalyzes the cleavage of L-kynurenine (L-Kyn) and L-3-hydroxykynurenine (L-3OHKyn) into anthranilic acid (AA) and 3-hydroxyanthranilic acid (3-OHAA), respectively. The polypeptide is Kynureninase 2 (bna5-2) (Aspergillus oryzae (strain ATCC 42149 / RIB 40) (Yellow koji mold)).